Here is a 419-residue protein sequence, read N- to C-terminus: Histidine--tRNA ligase (419 aa).

This sequence belongs to the class-II aminoacyl-tRNA synthetase family. As to quaternary structure, homodimer.

The protein resides in the cytoplasm. The catalysed reaction is tRNA(His) + L-histidine + ATP = L-histidyl-tRNA(His) + AMP + diphosphate + H(+). This Trichlorobacter lovleyi (strain ATCC BAA-1151 / DSM 17278 / SZ) (Geobacter lovleyi) protein is Histidine--tRNA ligase.